The primary structure comprises 313 residues: tRNA dimethylallyltransferase (313 aa).

Position 9–16 (9–16) interacts with ATP; sequence GPTASGKT. Residue 11–16 coordinates substrate; sequence TASGKT. An interaction with substrate tRNA region spans residues 34-37; sequence DSMQ.

The protein belongs to the IPP transferase family. Monomer. Requires Mg(2+) as cofactor.

It carries out the reaction adenosine(37) in tRNA + dimethylallyl diphosphate = N(6)-dimethylallyladenosine(37) in tRNA + diphosphate. Its function is as follows. Catalyzes the transfer of a dimethylallyl group onto the adenine at position 37 in tRNAs that read codons beginning with uridine, leading to the formation of N6-(dimethylallyl)adenosine (i(6)A). The chain is tRNA dimethylallyltransferase from Acetivibrio thermocellus (strain ATCC 27405 / DSM 1237 / JCM 9322 / NBRC 103400 / NCIMB 10682 / NRRL B-4536 / VPI 7372) (Clostridium thermocellum).